A 1228-amino-acid polypeptide reads, in one-letter code: S-layer protein (1228 aa).

Positions 1–30 are cleaved as a signal peptide; that stretch reads MDRKKAVKLATASAIAASAFVAANPNASEA.

Its subcellular location is the secreted. It localises to the cell wall. It is found in the S-layer. Functionally, the S-layer is a paracrystalline mono-layered assembly of proteins which coat the surface of bacteria. The polypeptide is S-layer protein (sbsA) (Geobacillus stearothermophilus (Bacillus stearothermophilus)).